The chain runs to 95 residues: Large ribosomal subunit protein bL25 (95 aa).

Belongs to the bacterial ribosomal protein bL25 family. As to quaternary structure, part of the 50S ribosomal subunit; part of the 5S rRNA/L5/L18/L25 subcomplex. Contacts the 5S rRNA. Binds to the 5S rRNA independently of L5 and L18.

Functionally, this is one of the proteins that binds to the 5S RNA in the ribosome where it forms part of the central protuberance. The sequence is that of Large ribosomal subunit protein bL25 from Shewanella oneidensis (strain ATCC 700550 / JCM 31522 / CIP 106686 / LMG 19005 / NCIMB 14063 / MR-1).